Consider the following 284-residue polypeptide: Cell division protein FtsQ (284 aa).

Residues 1-31 (MAQLPASMRRKRAAITSIHDKPPTRKQKLAN) are Cytoplasmic-facing. The chain crosses the membrane as a helical span at residues 32–52 (AGGWVLLVIAFVVLAVGIYGL). The Periplasmic segment spans residues 53-284 (YKVITDATVA…SIAGGTKAKP (232 aa)). In terms of domain architecture, POTRA spans 59 to 128 (ATVAKLEVVG…NGIRVRVMPR (70 aa)).

Belongs to the FtsQ/DivIB family. FtsQ subfamily. In terms of assembly, part of a complex composed of FtsB, FtsL and FtsQ.

It localises to the cell inner membrane. In terms of biological role, essential cell division protein. May link together the upstream cell division proteins, which are predominantly cytoplasmic, with the downstream cell division proteins, which are predominantly periplasmic. May control correct divisome assembly. This is Cell division protein FtsQ from Acinetobacter oleivorans (strain JCM 16667 / KCTC 23045 / DR1).